The primary structure comprises 545 residues: SLAIN motif-containing protein 1 (545 aa).

A coiled-coil region spans residues 14 to 53 (TTNGLVANAELEVKKLQELVRKLEKQNEQLRNRASAVSNC). 2 stretches are compositionally biased toward low complexity: residues 268–286 (TTST…SLYS) and 466–481 (IPSS…SGIP). Disordered regions lie at residues 268-342 (TTST…IRDC) and 461-526 (QGGS…LQPP). Polar residues predominate over residues 503–522 (STANGSSIPRSKIAQPQRSF).

The protein belongs to the SLAIN motif-containing family.

It is found in the cytoplasm. The protein localises to the cytoskeleton. In terms of biological role, microtubule plus-end tracking protein that might be involved in the regulation of cytoplasmic microtubule dynamics, microtubule organization and microtubule elongation. This is SLAIN motif-containing protein 1 (slain1) from Xenopus tropicalis (Western clawed frog).